We begin with the raw amino-acid sequence, 103 residues long: Small ribosomal subunit protein uS10 (103 aa).

This sequence belongs to the universal ribosomal protein uS10 family. Part of the 30S ribosomal subunit.

Its function is as follows. Involved in the binding of tRNA to the ribosomes. In Clostridioides difficile (strain 630) (Peptoclostridium difficile), this protein is Small ribosomal subunit protein uS10.